A 119-amino-acid chain; its full sequence is Large ribosomal subunit protein uL22 (119 aa).

This sequence belongs to the universal ribosomal protein uL22 family. In terms of assembly, part of the 50S ribosomal subunit.

In terms of biological role, this protein binds specifically to 23S rRNA; its binding is stimulated by other ribosomal proteins, e.g. L4, L17, and L20. It is important during the early stages of 50S assembly. It makes multiple contacts with different domains of the 23S rRNA in the assembled 50S subunit and ribosome. Its function is as follows. The globular domain of the protein is located near the polypeptide exit tunnel on the outside of the subunit, while an extended beta-hairpin is found that lines the wall of the exit tunnel in the center of the 70S ribosome. The polypeptide is Large ribosomal subunit protein uL22 (Chlorobaculum tepidum (strain ATCC 49652 / DSM 12025 / NBRC 103806 / TLS) (Chlorobium tepidum)).